The following is a 558-amino-acid chain: MAIPGRQYGLILPKKTQQLHPVLQKPSVFGNDSDDDDETSVSESLQREAAKKQAMKQTKLEIQKALAEDATVYEYDSIYDEMQKKKEENNPKLLLGKDRKPKYIHNLLKAVEIRKKEQEKRMEKKIQREREMEKGEFDDKEAFVTSAYKKKLQERAEEEEREKRAAALEACLDVTKQKDLSGFYRHLLNQAVGEEEVPKCSFREARSGIKEEKSRGFSNEVSSKNRIPQEKCILQTDVKVEENPDADSDFDAKSSADDEIEETRVNCRREKVIETPENDFKHHRSQNHSRSPSEERGHSTRHHTKGSRTSRGHEKREDQHQQKQSRDQENHYTDRDYRKERDSHRHREASHRDSHWKRHEQEDKPRARDQRERSDRVWKREKDREKYSQREQERDRQQNDQNRPSEKGEKEEKSKAKEEHMKVRKERYENNDKYRDREKREVGVQSSERNQDRKESSPNSRAKDKFLDQERSNKMRNMAKDKERNQEKPSNSESSLGAKHRLTEEGQEKGKEQERPPEAVSKFAKRNNEETVMSARDRYLARQMARVNAKTYIEKEDD.

The tract at residues 21 to 54 is disordered; it reads PVLQKPSVFGNDSDDDDETSVSESLQREAAKKQA. S27 and S33 each carry phosphoserine. The stretch at 104 to 170 forms a coiled coil; sequence IHNLLKAVEI…REKRAAALEA (67 aa). The necessary for alternative splicing activity stretch occupies residues 106–170; it reads NLLKAVEIRK…REKRAAALEA (65 aa). Residues K199 and K210 each participate in a glycyl lysine isopeptide (Lys-Gly) (interchain with G-Cter in SUMO2) cross-link. The span at 204-215 shows a compositional bias: basic and acidic residues; that stretch reads EARSGIKEEKSR. Positions 204 to 534 are disordered; that stretch reads EARSGIKEEK…KRNNEETVMS (331 aa). Residues 216–226 are compositionally biased toward polar residues; sequence GFSNEVSSKNR. A phosphoserine mark is found at S248, S254, and S255. Residues 250–280 are compositionally biased toward basic and acidic residues; that stretch reads FDAKSSADDEIEETRVNCRREKVIETPENDF. At T275 the chain carries Phosphothreonine. A Glycyl lysine isopeptide (Lys-Gly) (interchain with G-Cter in SUMO2) cross-link involves residue K281. Over residues 299 to 310 the composition is skewed to basic residues; sequence STRHHTKGSRTS. Basic and acidic residues-rich tracts occupy residues 311–442, 449–487, and 501–517; these read RGHE…KREV, RNQDRKESSPNSRAKDKFLDQERSNKMRNMAKDKERNQE, and RLTEEGQEKGKEQERPP. A coiled-coil region spans residues 379–427; it reads KREKDREKYSQREQERDRQQNDQNRPSEKGEKEEKSKAKEEHMKVRKER. At S457 the chain carries Phosphoserine.

It belongs to the NSRP1 family. Interacts (via C-terminus) with SRSF1. Interacts (via C-terminus) with SRSF2. In terms of tissue distribution, expressed in dendritic cells, T-cells, B-cells and natural killer cells. Expressed in secondary lymphoid organs such as spleen and mesenteric, axillary and brachial lymph nodes.

It is found in the nucleus. It localises to the nucleus speckle. RNA-binding protein that mediates pre-mRNA alternative splicing regulation. The sequence is that of Nuclear speckle splicing regulatory protein 1 (NSRP1) from Homo sapiens (Human).